Consider the following 283-residue polypeptide: Acetylglutamate kinase (283 aa).

Substrate-binding positions include 63–64, R85, and N178; that span reads GG.

It belongs to the acetylglutamate kinase family. ArgB subfamily.

The protein localises to the plastid. Its subcellular location is the chloroplast. It catalyses the reaction N-acetyl-L-glutamate + ATP = N-acetyl-L-glutamyl 5-phosphate + ADP. It functions in the pathway amino-acid biosynthesis; L-arginine biosynthesis; N(2)-acetyl-L-ornithine from L-glutamate: step 2/4. In terms of biological role, catalyzes the ATP-dependent phosphorylation of N-acetyl-L-glutamate. This Porphyra purpurea (Red seaweed) protein is Acetylglutamate kinase.